The following is a 3013-amino-acid chain: DmX-like protein 1 (3013 aa).

WD repeat units follow at residues 108–145 (FLDS…TEDE), 164–204 (KTAS…RPAV), and 227–275 (AHPR…NDCF). Phosphoserine occurs at positions 322, 420, 423, and 434. The interval 418 to 442 (PSSEASVEDSIQADLKSDEELDDGV) is disordered. One copy of the WD 4 repeat lies at 474 to 514 (DHQIEVLLSEWSKNADMLFSIHPMDGSLLVWHVDWLDEYQP). Phosphoserine is present on serine 572. WD repeat units follow at residues 578–619 (AHSK…ESAF) and 842–893 (KKRL…TPVS). Phosphoserine is present on residues serine 916 and serine 922. 3 WD repeats span residues 970 to 1008 (HLSS…GESA), 1145 to 1193 (EDGS…PLSK), and 1208 to 1248 (GAPP…EPVI). Phosphoserine occurs at positions 1829, 1896, 1903, and 1965. Disordered regions lie at residues 2364-2406 (GQAN…PPAV) and 2431-2462 (QSRA…GLQL). Over residues 2385-2398 (SKVSARESPVSSSS) the composition is skewed to low complexity. Over residues 2437 to 2455 (DSEESLESDDEEEEDDDDA) the composition is skewed to acidic residues. WD repeat units follow at residues 2728–2769 (KAIN…TCFR), 2771–2810 (GGNS…CPVT), 2822–2864 (CHNK…ANSL), 2870–2909 (CHDS…QRQL), 2912–2951 (SHDS…LLHT), and 2964–3002 (NIGT…SPLN).

The chain is DmX-like protein 1 (Dmxl1) from Mus musculus (Mouse).